The sequence spans 164 residues: Ribosome maturation factor RimP (164 aa).

This sequence belongs to the RimP family.

Its subcellular location is the cytoplasm. Functionally, required for maturation of 30S ribosomal subunits. This chain is Ribosome maturation factor RimP, found in Mycoplasma mycoides subsp. mycoides SC (strain CCUG 32753 / NCTC 10114 / PG1).